A 63-amino-acid chain; its full sequence is Small ribosomal subunit protein eS17 (63 aa).

It belongs to the eukaryotic ribosomal protein eS17 family.

The polypeptide is Small ribosomal subunit protein eS17 (rps17e) (Haloarcula marismortui (strain ATCC 43049 / DSM 3752 / JCM 8966 / VKM B-1809) (Halobacterium marismortui)).